Consider the following 393-residue polypeptide: Glutamate 5-kinase (393 aa).

K17 contributes to the ATP binding site. S57, D144, and N156 together coordinate substrate. Residue 176-177 (SD) participates in ATP binding. A PUA domain is found at 282–359 (AGSIAIDAGA…AEIAAILGYA (78 aa)). The interval 374-393 (APSGARSEEGGNEKKGKLHA) is disordered. Residues 379-393 (RSEEGGNEKKGKLHA) show a composition bias toward basic and acidic residues.

It belongs to the glutamate 5-kinase family.

The protein localises to the cytoplasm. It catalyses the reaction L-glutamate + ATP = L-glutamyl 5-phosphate + ADP. It participates in amino-acid biosynthesis; L-proline biosynthesis; L-glutamate 5-semialdehyde from L-glutamate: step 1/2. Catalyzes the transfer of a phosphate group to glutamate to form L-glutamate 5-phosphate. The sequence is that of Glutamate 5-kinase from Sinorhizobium fredii (strain NBRC 101917 / NGR234).